Consider the following 382-residue polypeptide: Mannitol-1-phosphate 5-dehydrogenase (382 aa).

Position 3-14 (3-14 (ALHFGAGNIGRG)) interacts with NAD(+). Position 269 is an N6-acetyllysine (Lys-269).

The protein belongs to the mannitol dehydrogenase family.

The enzyme catalyses D-mannitol 1-phosphate + NAD(+) = beta-D-fructose 6-phosphate + NADH + H(+). This is Mannitol-1-phosphate 5-dehydrogenase from Shigella sonnei (strain Ss046).